The sequence spans 233 residues: Large ribosomal subunit protein uL1 (233 aa).

Belongs to the universal ribosomal protein uL1 family. Part of the 50S ribosomal subunit.

Functionally, binds directly to 23S rRNA. The L1 stalk is quite mobile in the ribosome, and is involved in E site tRNA release. In terms of biological role, protein L1 is also a translational repressor protein, it controls the translation of the L11 operon by binding to its mRNA. The sequence is that of Large ribosomal subunit protein uL1 from Novosphingobium aromaticivorans (strain ATCC 700278 / DSM 12444 / CCUG 56034 / CIP 105152 / NBRC 16084 / F199).